The chain runs to 530 residues: MKFNDVTRGTGLEEHGITNANLIYWTPPTSVLYEQIIKRGEGLVSHMGALAVKTGHYTGRAANEKFIVDEPTCHENVAWGKVNKPFDPQKFDELYKRMLAYMDGRNLFVQDCFAGADREHRLPLRIITERAWHSLFARNMFIRATPEELEQHEPRFALINLPGFHAIPSIDGTHSEAFIIVNLGRKLILIGGTSYAGEIKKSIFTILNYILPVEKKILSMHCSANVGPKGDSAVFFGLSGTGKTTLSADSSRALIGDDEHGWDDKGLFNFEGGCYAKIIRLCPESEPEIFATTRRFGTILENVAINTRTRRVDLDDDSFTENTRASYPLTHIPNIVPSGIAGHPANIIMLTCDAYGVLPPISHLTKEQAMYHFLSGYTARVAGTEAGVKEPTATFSTCFGGPFMALNPTVYGELLREKISRHNVSCWLVNTGWNGGPYGVGERIRISYSRALINAALDGTLADGSFETDPFFGLAIPTSCPGVPSEMLNPRNTWSDPARYDDTASRLVAMFRSNFTKYQPYVSAEVANAL.

Residues arginine 60, tyrosine 195, and lysine 201 each contribute to the substrate site. Residues lysine 201, histidine 221, and 237-245 (GLSGTGKTT) contribute to the ATP site. Mn(2+) is bound by residues lysine 201 and histidine 221. Aspartate 258 provides a ligand contact to Mn(2+). Residues glutamate 286, arginine 324, 443–444 (RI), and serine 449 contribute to the ATP site. Arginine 324 contacts substrate.

Belongs to the phosphoenolpyruvate carboxykinase (ATP) family. Mn(2+) is required as a cofactor.

It is found in the cytoplasm. The catalysed reaction is oxaloacetate + ATP = phosphoenolpyruvate + ADP + CO2. It functions in the pathway carbohydrate biosynthesis; gluconeogenesis. Involved in the gluconeogenesis. Catalyzes the conversion of oxaloacetate (OAA) to phosphoenolpyruvate (PEP) through direct phosphoryl transfer between the nucleoside triphosphate and OAA. This is Phosphoenolpyruvate carboxykinase (ATP) from Pelobacter propionicus (strain DSM 2379 / NBRC 103807 / OttBd1).